The chain runs to 236 residues: GTP cyclohydrolase 1 (236 aa).

Residues 1 to 52 (MAAARSCNGYARREGPPSPKLGTEKPRVSAGSGGSGDGWRGERPRSEEDNEL) are disordered. Zn(2+) contacts are provided by Cys-127, His-130, and Cys-198.

It belongs to the GTP cyclohydrolase I family. Toroid-shaped homodecamer, composed of two pentamers of five dimers.

The protein localises to the cytoplasm. It is found in the nucleus. It carries out the reaction GTP + H2O = 7,8-dihydroneopterin 3'-triphosphate + formate + H(+). It functions in the pathway cofactor biosynthesis; 7,8-dihydroneopterin triphosphate biosynthesis; 7,8-dihydroneopterin triphosphate from GTP: step 1/1. GTP shows a positive allosteric effect, and tetrahydrobiopterin inhibits the enzyme activity. Zinc is required for catalytic activity. Inhibited by Mg(2+). May positively regulate nitric oxide synthesis in endothelial cells. May be involved in dopamine synthesis. May modify pain sensitivity and persistence. In Gallus gallus (Chicken), this protein is GTP cyclohydrolase 1 (GCH1).